Reading from the N-terminus, the 130-residue chain is Mediator of RNA polymerase II transcription subunit 31 (130 aa).

This sequence belongs to the Mediator complex subunit 31 family. Component of the Mediator complex.

Its subcellular location is the nucleus. Its function is as follows. Component of the Mediator complex, a coactivator involved in the regulated transcription of nearly all RNA polymerase II-dependent genes. Mediator functions as a bridge to convey information from gene-specific regulatory proteins to the basal RNA polymerase II transcription machinery. Mediator is recruited to promoters by direct interactions with regulatory proteins and serves as a scaffold for the assembly of a functional preinitiation complex with RNA polymerase II and the general transcription factors. This is Mediator of RNA polymerase II transcription subunit 31 (SOH1) from Candida glabrata (strain ATCC 2001 / BCRC 20586 / JCM 3761 / NBRC 0622 / NRRL Y-65 / CBS 138) (Yeast).